Here is a 362-residue protein sequence, read N- to C-terminus: D-alanine--D-alanine ligase (362 aa).

In terms of domain architecture, ATP-grasp spans 153 to 357 (KKIAREAGIP…YADLLTTLVS (205 aa)). 180–235 (RELLGLPVFVKPARGGSSIGISKVDSWRDLPAAIEEAASHDPKVIIEAMITGPEVE) is a binding site for ATP. Residues Asp-312, Glu-324, and Asn-326 each contribute to the Mg(2+) site.

It belongs to the D-alanine--D-alanine ligase family. Mg(2+) serves as cofactor. The cofactor is Mn(2+).

Its subcellular location is the cytoplasm. The catalysed reaction is 2 D-alanine + ATP = D-alanyl-D-alanine + ADP + phosphate + H(+). It functions in the pathway cell wall biogenesis; peptidoglycan biosynthesis. Cell wall formation. The sequence is that of D-alanine--D-alanine ligase from Corynebacterium urealyticum (strain ATCC 43042 / DSM 7109).